Consider the following 282-residue polypeptide: Pantothenate synthetase (282 aa).

26-33 contributes to the ATP binding site; that stretch reads MGNLHEGH. Catalysis depends on histidine 33, which acts as the Proton donor. Glutamine 57 serves as a coordination point for (R)-pantoate. Beta-alanine is bound at residue glutamine 57. An ATP-binding site is contributed by 148-151; the sequence is GKKD. Glutamine 154 serves as a coordination point for (R)-pantoate. Residue 185–188 participates in ATP binding; it reads LSSR.

The protein belongs to the pantothenate synthetase family. In terms of assembly, homodimer.

Its subcellular location is the cytoplasm. It catalyses the reaction (R)-pantoate + beta-alanine + ATP = (R)-pantothenate + AMP + diphosphate + H(+). It functions in the pathway cofactor biosynthesis; (R)-pantothenate biosynthesis; (R)-pantothenate from (R)-pantoate and beta-alanine: step 1/1. Functionally, catalyzes the condensation of pantoate with beta-alanine in an ATP-dependent reaction via a pantoyl-adenylate intermediate. In Paracidovorax citrulli (strain AAC00-1) (Acidovorax citrulli), this protein is Pantothenate synthetase.